Here is a 161-residue protein sequence, read N- to C-terminus: Thy-1 membrane glycoprotein (161 aa).

An N-terminal signal peptide occupies residues 1–19 (MNPVISITLLLSVLQMSRG). At Gln20 the chain carries Pyrrolidone carboxylic acid. The region spanning 20–126 (QRVISLTACL…NKTINVIRDK (107 aa)) is the Ig-like V-type domain. 2 disulfide bridges follow: Cys28/Cys130 and Cys38/Cys104. N-linked (GlcNAc...) (complex) asparagine; alternate glycosylation is present at Asn42. N-linked (GlcNAc...) (high mannose) asparagine; alternate glycosylation occurs at Asn42. An N-linked (GlcNAc...) asparagine; alternate glycan is attached at Asn42. Ser82 carries the post-translational modification Phosphoserine. Asn93 carries an N-linked (GlcNAc...) (complex) asparagine; alternate glycan. An N-linked (GlcNAc...) asparagine; alternate glycan is attached at Asn93. Asn117 is a glycosylation site (N-linked (GlcNAc...) (high mannose) asparagine; in brain; alternate). N-linked (GlcNAc...) (hybrid) asparagine; in brain; alternate glycosylation is present at Asn117. Cys130 is lipidated: GPI-anchor amidated cysteine. Residues 131 to 161 (GGISLLVQNTSWLLLLLLSLSFLQATDFISL) constitute a propeptide, removed in mature form.

In terms of processing, glycosylation is tissue specific. Sialylation of N-glycans at Asn-93 in brain and at Asn-42, Asn-93 and Asn-117 in thymus. Abundant in lymphoid tissues.

The protein resides in the cell membrane. May play a role in cell-cell or cell-ligand interactions during synaptogenesis and other events in the brain. This Rattus norvegicus (Rat) protein is Thy-1 membrane glycoprotein (Thy1).